The primary structure comprises 771 residues: Leucine-rich repeat and fibronectin type III domain-containing protein 1 (771 aa).

The N-terminal stretch at 1–31 (MAPGPFSSALLSPPPAALPFLLLLWAGASRG) is a signal peptide. The 34-residue stretch at 32–65 (QPCPGRCICQNVAPTLTMLCAKTGLLFVPPAIDR) folds into the LRRNT domain. Residues 32–536 (QPCPGRCICQ…LRAHFLGGTM (505 aa)) lie on the Extracellular side of the membrane. 7 LRR repeats span residues 66–87 (RVVE…DFAN), 90–111 (SLVH…AFAD), 114–135 (ALRA…QLRG), 138–159 (NLRH…AFDA), 163–184 (TVED…AVGQ), 187–208 (NLNT…TFVQ), and 211–232 (KLVR…GLFL). N-linked (GlcNAc...) asparagine glycosylation is present at Asn87. The LRRCT domain maps to 252–298 (NPLHCNCELLWLRRLTREDDLETCATPEHLTDRYFWSIPEEEFLCEP). Residues 299 to 386 (PLITRQAGGR…GEATAPVEVC (88 aa)) form the Ig-like domain. Cys321 and Cys370 are oxidised to a cystine. Asn343 carries N-linked (GlcNAc...) asparagine glycosylation. The tract at residues 397-422 (PAAPPPLTEPGSSDIATPGRPGANDS) is disordered. Residues 424–520 (AERRLVAAEL…GCVQFTTAGD (97 aa)) enclose the Fibronectin type-III domain. Residues 537–557 (IIAIGGVIVASVLVFIVLLMI) traverse the membrane as a helical segment. At 558-771 (RYKVYGDGDS…STEWMLESTV (214 aa)) the chain is on the cytoplasmic side. Residues Ser613 and Ser718 each carry the phosphoserine modification. The interval 654–743 (PSEETSGEES…HLDGAGGGAA (90 aa)) is disordered. Over residues 719-732 (YPRRARRTKRHRST) the composition is skewed to basic residues. The PDZ-binding motif lies at 768–771 (ESTV).

The protein belongs to the LRFN family. Can form heteromeric complexes with LRFN2, LRFN3, LRFN4 and LRFN5. Forms homomeric complexes, but not across cell junctions. Interacts with DLG1, DLG2, DLG3 and DLG4. Interacts with 2 AMPA receptor subunits GRIA1 and GRIA2 and NMDA receptor subunit GRIN1. In terms of processing, glycosylated.

Its subcellular location is the membrane. The protein resides in the synapse. It is found in the postsynaptic density membrane. Promotes neurite outgrowth in hippocampal neurons. Involved in the regulation and maintenance of excitatory synapses. Induces the clustering of excitatory postsynaptic proteins, including DLG4, DLGAP1, GRIA1 and GRIN1. The sequence is that of Leucine-rich repeat and fibronectin type III domain-containing protein 1 (LRFN1) from Homo sapiens (Human).